The sequence spans 62 residues: Large ribosomal subunit protein bL28 (62 aa).

A disordered region spans residues 1-28 (MARVCAITGRKARSGNSRSHAMNATKRK).

The protein belongs to the bacterial ribosomal protein bL28 family.

The polypeptide is Large ribosomal subunit protein bL28 (Bacillus thuringiensis (strain Al Hakam)).